The sequence spans 140 residues: Ribosome-binding factor A (140 aa).

The tract at residues 115–140 (EDERQQRGDIPPGSDQQPGSDEQPTG) is disordered. The segment covering 128-140 (SDQQPGSDEQPTG) has biased composition (polar residues).

This sequence belongs to the RbfA family. As to quaternary structure, monomer. Binds 30S ribosomal subunits, but not 50S ribosomal subunits or 70S ribosomes.

The protein resides in the cytoplasm. Its function is as follows. One of several proteins that assist in the late maturation steps of the functional core of the 30S ribosomal subunit. Associates with free 30S ribosomal subunits (but not with 30S subunits that are part of 70S ribosomes or polysomes). Required for efficient processing of 16S rRNA. May interact with the 5'-terminal helix region of 16S rRNA. This chain is Ribosome-binding factor A, found in Synechococcus sp. (strain CC9605).